A 405-amino-acid chain; its full sequence is Probable tRNA sulfurtransferase (405 aa).

The 106-residue stretch at 60-165 (VPVAESLKQI…EEAAYLSYEN (106 aa)) folds into the THUMP domain. Residues 183–184 (ML), 208–209 (HF), Arg-265, Gly-287, and Gln-296 contribute to the ATP site.

Belongs to the ThiI family.

It localises to the cytoplasm. It carries out the reaction [ThiI sulfur-carrier protein]-S-sulfanyl-L-cysteine + a uridine in tRNA + 2 reduced [2Fe-2S]-[ferredoxin] + ATP + H(+) = [ThiI sulfur-carrier protein]-L-cysteine + a 4-thiouridine in tRNA + 2 oxidized [2Fe-2S]-[ferredoxin] + AMP + diphosphate. It catalyses the reaction [ThiS sulfur-carrier protein]-C-terminal Gly-Gly-AMP + S-sulfanyl-L-cysteinyl-[cysteine desulfurase] + AH2 = [ThiS sulfur-carrier protein]-C-terminal-Gly-aminoethanethioate + L-cysteinyl-[cysteine desulfurase] + A + AMP + 2 H(+). The protein operates within cofactor biosynthesis; thiamine diphosphate biosynthesis. Functionally, catalyzes the ATP-dependent transfer of a sulfur to tRNA to produce 4-thiouridine in position 8 of tRNAs, which functions as a near-UV photosensor. Also catalyzes the transfer of sulfur to the sulfur carrier protein ThiS, forming ThiS-thiocarboxylate. This is a step in the synthesis of thiazole, in the thiamine biosynthesis pathway. The sulfur is donated as persulfide by IscS. This chain is Probable tRNA sulfurtransferase, found in Streptococcus mutans serotype c (strain ATCC 700610 / UA159).